The primary structure comprises 258 residues: Spindlin-3 (258 aa).

Residues 1 to 23 (MKTPFGKAAAGQRSRTGAGHGSV) form a disordered region. 3 tudor-like domain regions span residues 50 to 99 (VGCR…LELH), 129 to 178 (VGKA…YQLL), and 210 to 255 (VGKQ…YDLV). 2 histone H3K4me3 and H3R8me2a binding regions span residues glutamate 138 and 246–248 (DFH).

This sequence belongs to the SPIN/STSY family. As to quaternary structure, interacts with C11orf84/SPINDOC.

Exhibits H3K4me3-binding activity. This is Spindlin-3 (SPIN3) from Homo sapiens (Human).